Consider the following 889-residue polypeptide: MTTFLNINQIRTTFIEFFKKYGHHHASSSSLVPGNDPSLFFVNAGIVQFKDYVRAPETSKYSRVVTCQKCVRAGGKHNDLESVGYTARHHTFFEMLGNFSFGEDNAKADFMQLIWNFLTKELFIDEDRLIVTVYHTDHETAKLWRSIAGLDDSRIIRIKTDDNFWSMGPVGPCGPCTEIFYDHGDKIPGGLPGTKDENGGRYVEIWNIVFMQYEQLNESTRVELAKRCIDTGAGLERIATVLQGVYDNYDIDLFKNLIANIEHLTKIKSVGEANFSHRIIADHLRASAFLIADGVMPSNDGRGYVLRRIMRRAMNQIHQLGCKEPVMHLLVQGLINEMGDFYKELRVRQELITYLLKNEEEKFKTTLSKGLKLLEEESKNLTSGSQLSGHIAFKLYDTYGFPFDLTQDILKKRSISINKTEFDQNMLEQQNRARQLWKGQGSNKEQLLWEKLKEEFRATEFVGYSLCQAEGIVVSLIQDNQYVEYIDINQVDDNNKEFWLITNQTPFYGQSGGQIGDIGIIKNNECTIHVTDTIKLFGCTHVHICKIVSGKINLNAVVHMAIDKQYRTQLQIHHSATHILHAALREILGNHIIQKGSLVAYDYLRFDVSHPTSISKDLLTKIENRVNEIILNNTAVKLRIMPFDQAIAHGAVALFEEKYGDEVRAISIGETSDARYYSFELCGGTHVKYTGDIGAFRILSESAIAAGVRRIEAIAGKHVIKQARQNSELLDLIAEKFSVTKQTIMSKIDGIIEENNLLKKQLHQLKYNQLILCEKDIQNMADNIGKIKLVYKNIEDYDLQIVRKAVSNTTKNIQNLVMVVISNNDKKSTIIIGVSDNITNKIQANNLVKEIINYIGGSGGGSATLAQIGCQYTSKLLDLKNIICKLLAT.

Zn(2+) contacts are provided by His-574, His-578, Cys-682, and His-686.

It belongs to the class-II aminoacyl-tRNA synthetase family. Zn(2+) is required as a cofactor.

The protein localises to the cytoplasm. The catalysed reaction is tRNA(Ala) + L-alanine + ATP = L-alanyl-tRNA(Ala) + AMP + diphosphate. In terms of biological role, catalyzes the attachment of alanine to tRNA(Ala) in a two-step reaction: alanine is first activated by ATP to form Ala-AMP and then transferred to the acceptor end of tRNA(Ala). Also edits incorrectly charged Ser-tRNA(Ala) and Gly-tRNA(Ala) via its editing domain. In Orientia tsutsugamushi (strain Ikeda) (Rickettsia tsutsugamushi), this protein is Alanine--tRNA ligase.